A 1263-amino-acid polypeptide reads, in one-letter code: MDVPSSSNVTGRRKRQVLDDDEDDGFRSTPLRKVRGTKKIRPADVVPETIMTKIGAHIDDIVNKKKVGELNCFEYKSPLEIHTIEDMIKAKASIQEMAVVLEGAQCIIGYRVDRLHHDVRQIDSALSSGTVMRDSNGEEIHLTLESRKAKKKMAVVDGMNGMLDFLNNMDDALTTTELDADNDKNWKEDEENIAGEPRIDFKANSKDVDAFLQRDIFPEKLIYALSIKRATDLRADLLSDVSNYISADDTAHDLKDANIDWLRANPTFQKATKGSVCNSSNSFHSLNYYGIHSPDGRTLMLHNRIADKNADDRFFTSDVSVSLVKNTRALLTNSLDKKPRILDNYLMLEVKDRPVIGRYKIMSKDVKKSTLPLAESSREKDLANLTFAEMNHRPSNLDMTVAGASDMSMLPGNQGLPLAQGENDETIALDRLTPPLQSSVSQKASDEYVLPPLEANDLDEHLIGKLPIEPNEMDQTLANMFDKKLEVFNTSDTLESKVWKNGIRAEEWGEDDEAIMKNDTKHPRQAGIEGWIKATDAWTNYDVVKMNVNREARSQLDENAIDEQESYRNMVPEIGKNLFLVKSDDYMNNYPGDRPADFTVNDEVSDVMKMWSGEDSTAEDDVPLEQIQQEIREQVQQQDVDMEPIEEMDYDAGGAAFDVDFDDRLAAPVEVEEMEGDNNRNDGRVADILFNEQMDETEVEERNEQDVQRELEDIALAADEVAELMTSAPPPQLVGPSAEMREEIQNIGKNDNAHWVPPVVGDQERQAAVTAQRKRREKKAKSRKATVEDFVHYFRDIPDDEIEREITAAKCSKIADEKSTFLSEQQLYLPTLGIENKPHVAFEMGLLGNSGMFFKKSYGKIRLERVKNQKAEQDLFIDEARGNKDSDCLNWLLSFSGFRCMENPEPITGSDSDENLRTAVEQPFDDDFANDYYDEDRYDPNYEQQLAAAQMGPDMQRKLALTASHINQMFPNIHSKRYGGEYGDSDDEFDDSFDRQSIQAKNLDAAKHKKCLAEILKTDSLSMPSIQYVLEQLTSNQTLRMNNTTIRAADDRNETGRPATPTMEADKTLTSVFDYRSPNKSNHDVNETMKALTEMPDYQAADERPNNQPTTSTYGTANTENRKVHINGCHTLLSLALSMPSRMGETVRPSSIVSFLLHIANENNLQIVQDRSKRSWMSDFIVLNSSESLPRGLKMGRIEDQDEFWKRTQDPDAIEGTASDANNVFSNLMRRPKAVPVRKGRGAGGQPTTSDLGAIVEEEEMEE.

Residues Met-1–Thr-10 show a composition bias toward polar residues. The interval Met-1–Thr-29 is disordered. Residues Asn-691–Met-725 are a coiled coil. Disordered regions lie at residues Tyr-1098–Asn-1118 and Phe-1225–Glu-1263. Polar residues predominate over residues Asn-1106–Asn-1118. Basic residues predominate over residues Arg-1230–Arg-1241.

As to quaternary structure, component of the condensin I complex, which contains the mix-1/SMC2 and smc-4/SMC4 heterodimer, and three non SMC subunits that probably regulate the complex: dpy-26, capg-1 and dpy-28. Within the complex, interacts with dpy-28, mix-1, smc-4 and capg-1. Component of the dosage compensation complex, which consists of the condensin I-like components mix-1/SMC2 and dpy-27/SMC4, and the three non SMC subunits dpy-26, capg-1 and dpy-28. Within the complex, interacts with dpy-27, dpy-28, mix-1 and capg-1. The interaction with dpy-27 is required for dpy-27 protein stability. Interacts with smcl-1. As to expression, expressed in embryos and in somatic and germline tissues in L4 stage larvae (at protein level).

The protein localises to the nucleus. It localises to the chromosome. Required for both chromosome condensation and segregation and for X-chromosome dosage compensation depending on its binding partners. Member of the condensin I complex, a complex required for conversion of interphase chromatin into mitotic-like condense chromosomes and for proper chromosome segregation in mitosis and meiosis. As a member of the condensin I complex, further controls the crossover number and distribution in meiosis by restricting double strand break formation, probably by influencing higher-order chromosome structure. Plays a role in robust cytokinesis upon presence of chromatin obstructions. Also a member of the condensin I-like dosage compensation complex that associates specifically with hermaphrodite X chromosomes to reduce their gene transcription during interphase, possibly through chromatin reorganization. As a member of the dosage compensation complex, also binds to regulatory regions of the autosomal her-1 gene, required for male development, possibly contributing to its repression in hermaphrodites. The sequence is that of Condensin complex subunit dpy-26 from Caenorhabditis elegans.